The sequence spans 429 residues: C4-dicarboxylate transport protein (429 aa).

The next 8 helical transmembrane spans lie at 3–23 (VSIF…GVLL), 44–64 (LIKM…IAGM), 76–96 (IALL…LVVV), 144–164 (AFAS…GFAL), 184–204 (VIFG…FGAM), 222–242 (LILC…GTIA), 331–351 (TLLV…GSGF), and 352–372 (IVLA…LALI).

The protein belongs to the dicarboxylate/amino acid:cation symporter (DAACS) (TC 2.A.23) family.

The protein resides in the cell inner membrane. Responsible for the transport of dicarboxylates such as succinate, fumarate, and malate from the periplasm across the membrane. The sequence is that of C4-dicarboxylate transport protein from Yersinia pestis bv. Antiqua (strain Antiqua).